The following is a 186-amino-acid chain: Glutathione peroxidase 7 (186 aa).

A signal peptide spans methionine 1–alanine 18. Cysteine 56 is an active-site residue.

The protein belongs to the glutathione peroxidase family.

The protein resides in the secreted. The catalysed reaction is 2 glutathione + H2O2 = glutathione disulfide + 2 H2O. This chain is Glutathione peroxidase 7 (GPX7), found in Bos taurus (Bovine).